A 342-amino-acid polypeptide reads, in one-letter code: tRNA N6-adenosine threonylcarbamoyltransferase (342 aa).

2 residues coordinate Fe cation: H111 and H115. Substrate contacts are provided by residues 134–138 (LVSGG), D167, G180, and N274. D302 serves as a coordination point for Fe cation.

It belongs to the KAE1 / TsaD family. Fe(2+) serves as cofactor.

It is found in the cytoplasm. It catalyses the reaction L-threonylcarbamoyladenylate + adenosine(37) in tRNA = N(6)-L-threonylcarbamoyladenosine(37) in tRNA + AMP + H(+). In terms of biological role, required for the formation of a threonylcarbamoyl group on adenosine at position 37 (t(6)A37) in tRNAs that read codons beginning with adenine. Is involved in the transfer of the threonylcarbamoyl moiety of threonylcarbamoyl-AMP (TC-AMP) to the N6 group of A37, together with TsaE and TsaB. TsaD likely plays a direct catalytic role in this reaction. In Herminiimonas arsenicoxydans, this protein is tRNA N6-adenosine threonylcarbamoyltransferase.